Reading from the N-terminus, the 356-residue chain is Glutamine synthetase nodule isozyme (356 aa).

A GS beta-grasp domain is found at 19 to 99; the sequence is IIAEYIWIGG…VMCDAYTPAG (81 aa). Residues 41–66 are disordered; sequence PGPVSDPSKLPKWNYDGSSTGQAPGE. A GS catalytic domain is found at 106 to 356; the sequence is KRHNAAKIFS…IADTTILWKP (251 aa).

This sequence belongs to the glutamine synthetase family. Homooctamer.

Its subcellular location is the cytoplasm. The enzyme catalyses L-glutamate + NH4(+) + ATP = L-glutamine + ADP + phosphate + H(+). This chain is Glutamine synthetase nodule isozyme, found in Vigna aconitifolia (Moth bean).